The sequence spans 369 residues: Phosphate acyltransferase (369 aa).

The segment at 342–369 (ASRAPNSQTAGGERAAAVPQSAQLRMDS) is disordered.

The protein belongs to the PlsX family. In terms of assembly, homodimer. Probably interacts with PlsY.

The protein resides in the cytoplasm. It catalyses the reaction a fatty acyl-[ACP] + phosphate = an acyl phosphate + holo-[ACP]. It functions in the pathway lipid metabolism; phospholipid metabolism. Functionally, catalyzes the reversible formation of acyl-phosphate (acyl-PO(4)) from acyl-[acyl-carrier-protein] (acyl-ACP). This enzyme utilizes acyl-ACP as fatty acyl donor, but not acyl-CoA. The chain is Phosphate acyltransferase from Methylocella silvestris (strain DSM 15510 / CIP 108128 / LMG 27833 / NCIMB 13906 / BL2).